Reading from the N-terminus, the 186-residue chain is Interferon lambda-3 (186 aa).

The N-terminal stretch at M1–A21 is a signal peptide. 3 disulfide bridges follow: C31–C128, C65–C160, and C178–C185.

The protein belongs to the lambda interferon family.

It localises to the secreted. In terms of biological role, cytokine which plays a critical role in the antiviral host defense, predominantly in the epithelial tissues. Acts as a ligand for the heterodimeric class II cytokine receptor composed of IL10RB and IFNLR1, and receptor engagement leads to the activation of the JAK/STAT signaling pathway resulting in the expression of IFN-stimulated genes (ISG), which mediate the antiviral state. Has a restricted receptor distribution and therefore restricted targets: is primarily active in epithelial cells and this cell type-selective action is because of the epithelial cell-specific expression of its receptor IFNLR1. Exhibits antiviral activity against the H5N1 influenza A virus. Induces the expression of the antiviral MX protein in epithelial-rich tissues, such as intestine, trachea and lung. The polypeptide is Interferon lambda-3 (IFNL3) (Gallus gallus (Chicken)).